A 186-amino-acid polypeptide reads, in one-letter code: Ras-related protein rapA (186 aa).

12-19 (GSGGVGKS) is a GTP binding site. Residues 34–42 (YDPTIEDSY) carry the Effector region motif. Residues 59 to 63 (DTAGT) and 118 to 121 (NKCD) each bind GTP. Cysteine methyl ester is present on cysteine 183. The S-geranylgeranyl cysteine moiety is linked to residue cysteine 183. Residues 184–186 (ALL) constitute a propeptide, removed in mature form.

Belongs to the small GTPase superfamily. Ras family. As to quaternary structure, interacts with ralGDS (only when rapA is in its GTP-bound state). Interacts with the Rap guanine nucleotide exchange factor glfB.

The protein resides in the cell membrane. It catalyses the reaction GTP + H2O = GDP + phosphate + H(+). Its function is as follows. G protein of the Ras family that positively regulates phagocytosis and negatively regulates macropinocytosis. May be involved in the activation of guanylyl cyclase during the response to hyperosmotic conditions. Overexpressing cells generate alterations in cell shape and contractile responses. Involved in chemotaxis via regulation of the balance of Ras and Rap signaling at the leading edge of chemotaxing cells. This Dictyostelium discoideum (Social amoeba) protein is Ras-related protein rapA (rapA).